A 201-amino-acid polypeptide reads, in one-letter code: NADH-quinone oxidoreductase subunit C (201 aa).

It belongs to the complex I 30 kDa subunit family. NDH-1 is composed of 14 different subunits. Subunits NuoB, C, D, E, F, and G constitute the peripheral sector of the complex.

The protein resides in the cell inner membrane. It catalyses the reaction a quinone + NADH + 5 H(+)(in) = a quinol + NAD(+) + 4 H(+)(out). Functionally, NDH-1 shuttles electrons from NADH, via FMN and iron-sulfur (Fe-S) centers, to quinones in the respiratory chain. The immediate electron acceptor for the enzyme in this species is believed to be ubiquinone. Couples the redox reaction to proton translocation (for every two electrons transferred, four hydrogen ions are translocated across the cytoplasmic membrane), and thus conserves the redox energy in a proton gradient. This Azoarcus sp. (strain BH72) protein is NADH-quinone oxidoreductase subunit C.